A 309-amino-acid chain; its full sequence is Protoheme IX farnesyltransferase 2 (309 aa).

8 helical membrane passes run 35 to 55, 59 to 79, 107 to 127, 131 to 151, 159 to 179, 186 to 206, 238 to 258, and 289 to 309; these read FKVV…APDV, MGVQ…AAVI, AHAL…LMLW, LTAI…TSFL, IVIG…SETG, WLLV…LAIA, LLAI…IYLI, and FSII…WLLL.

Belongs to the UbiA prenyltransferase family. Protoheme IX farnesyltransferase subfamily.

It is found in the cell inner membrane. It carries out the reaction heme b + (2E,6E)-farnesyl diphosphate + H2O = Fe(II)-heme o + diphosphate. It functions in the pathway porphyrin-containing compound metabolism; heme O biosynthesis; heme O from protoheme: step 1/1. Functionally, converts heme B (protoheme IX) to heme O by substitution of the vinyl group on carbon 2 of heme B porphyrin ring with a hydroxyethyl farnesyl side group. This chain is Protoheme IX farnesyltransferase 2, found in Pseudoalteromonas translucida (strain TAC 125).